Here is a 104-residue protein sequence, read N- to C-terminus: Large ribosomal subunit protein bL21 (104 aa).

Belongs to the bacterial ribosomal protein bL21 family. As to quaternary structure, part of the 50S ribosomal subunit. Contacts protein L20.

In terms of biological role, this protein binds to 23S rRNA in the presence of protein L20. In Salinispora tropica (strain ATCC BAA-916 / DSM 44818 / JCM 13857 / NBRC 105044 / CNB-440), this protein is Large ribosomal subunit protein bL21.